The primary structure comprises 129 residues: Small ribosomal subunit protein uS11 (129 aa).

Belongs to the universal ribosomal protein uS11 family. As to quaternary structure, part of the 30S ribosomal subunit. Interacts with proteins S7 and S18. Binds to IF-3.

Located on the platform of the 30S subunit, it bridges several disparate RNA helices of the 16S rRNA. Forms part of the Shine-Dalgarno cleft in the 70S ribosome. This chain is Small ribosomal subunit protein uS11, found in Francisella tularensis subsp. mediasiatica (strain FSC147).